A 367-amino-acid polypeptide reads, in one-letter code: Germination protease (367 aa).

A propeptide spanning residues 1 to 15 (MKEPLDLSKYAVRTD) is cleaved from the precursor.

The protein belongs to the peptidase A25 family. In terms of assembly, homotetramer. Autoproteolytically processed. The inactive tetrameric zymogen termed p46 autoprocesses to a smaller form termed p41, which is active only during spore germination.

It carries out the reaction Endopeptidase action with P4 Glu or Asp, P1 preferably Glu &gt; Asp, P1' hydrophobic and P2' Ala.. Functionally, initiates the rapid degradation of small, acid-soluble proteins during spore germination. This is Germination protease from Bacillus cytotoxicus (strain DSM 22905 / CIP 110041 / 391-98 / NVH 391-98).